The following is a 555-amino-acid chain: Glutamate--tRNA ligase (555 aa).

The 'HIGH' region signature appears at 100–110 (PNPSGPLHIGH).

It belongs to the class-I aminoacyl-tRNA synthetase family. Glutamate--tRNA ligase type 2 subfamily.

It is found in the cytoplasm. It catalyses the reaction tRNA(Glu) + L-glutamate + ATP = L-glutamyl-tRNA(Glu) + AMP + diphosphate. Functionally, catalyzes the attachment of glutamate to tRNA(Glu) in a two-step reaction: glutamate is first activated by ATP to form Glu-AMP and then transferred to the acceptor end of tRNA(Glu). The sequence is that of Glutamate--tRNA ligase from Methanococcus maripaludis (strain C7 / ATCC BAA-1331).